The chain runs to 636 residues: MMEDEDFLLALRLQEQFDQETPAAGWPDEDCPSSKRRRVDPSGGLDVIPFTQPRAERPLSIVDESWETLDPNPDVRAMFLQFNDKFFWGKLSGVEVKWSPRMTLCAGVCSYEGRGGLCSIRLSEPLLKLRPRKDLVQTLLHEMIHALLFVTQNNRDRDGHGPEFCKHMNRINQASGTNITIYHSFHDEVDVYRQHWWRCNGPCQNRRPFFGYVKRAMNRPPSARDPWWADHQRSCGGTYTKIKEPENYGKTGKSDKQRDKMPATEMPKKSKPPSSTSSSGSQDIRNIIPFSGRGFVLGGNAQIPTNKQIQSPPKAPPEPLHSPPDSPLLPRLQLNEDNLKRLSSGTSNIPRKRSVGNTNAFINVNGSPVRISNGNGSGGKQRSVRDLFQAIVLKSPDRGASAVGSSKSSTDASTADYRSNSALDAKPSGKTSLITDHLSYTISGPKTLSAESNISKYFGGSAKTDVQDSKLKTFGSPQKSAIGTPGYVSKAFGSNQRPDSTSSGIRNTGSPQRSHASATSGSSFKHFRGPAKPESNFPSPRNIGSPRTSGTTPSGAKKRSWEEHNSERVFDYFQRTVGESATSTDKKREEVRSEAPPPVRDQQANNPPAQITVHCPVCHIRLPESTINDHLDSCLL.

Residues 19–42 form a disordered region; it reads QETPAAGWPDEDCPSSKRRRVDPS. Residues 76–183 enclose the SprT-like domain; it reads RAMFLQFNDK…ASGTNITIYH (108 aa). A Zn(2+)-binding site is contributed by His-141. Glu-142 is an active-site residue. Zn(2+) is bound by residues His-145 and His-160. 2 disordered regions span residues 238-382 and 398-430; these read TYTK…GKQR and RGAS…PSGK. Residues 241–268 are compositionally biased toward basic and acidic residues; that stretch reads KIKEPENYGKTGKSDKQRDKMPATEMPK. Positions 272–281 are enriched in low complexity; that stretch reads PPSSTSSSGS. An SHP-box motif is present at residues 290-298; it reads FSGRGFVLG. Polar residues predominate over residues 302–311; sequence QIPTNKQIQS. A compositionally biased stretch (pro residues) spans 313 to 327; the sequence is PKAPPEPLHSPPDSP. Residues 341-374 are compositionally biased toward polar residues; that stretch reads RLSSGTSNIPRKRSVGNTNAFINVNGSPVRISNG. Positions 399 to 416 are enriched in low complexity; sequence GASAVGSSKSSTDASTAD. Positions 451–458 match the PIP-box motif; the sequence is ESNISKYF. Residues 473–608 are disordered; it reads TFGSPQKSAI…VRDQQANNPP (136 aa). Composition is skewed to polar residues over residues 492–523 and 545–554; these read FGSN…SGSS and SPRTSGTTPS. Positions 535–566 match the Nuclear localization signal motif; that stretch reads SNFPSPRNIGSPRTSGTTPSGAKKRSWEEHNS. 2 stretches are compositionally biased toward basic and acidic residues: residues 559–570 and 584–593; these read RSWEEHNSERVF and TDKKREEVRS. The UBZ4-type zinc-finger motif lies at 612–636; sequence TVHCPVCHIRLPESTINDHLDSCLL. Zn(2+) contacts are provided by Cys-615, Cys-618, His-630, and Cys-634.

This sequence belongs to the Spartan family. In terms of assembly, homodimer. Zn(2+) serves as cofactor. Autocatalytically cleaved in response to double-stranded DNA-binding: autocatalytic cleavage takes place in trans and leads to inactivation.

Its subcellular location is the nucleus. The protein localises to the chromosome. DNA-binding activates the protease activity: single-stranded DNA-binding specifically activates ability to cleave covalent DNA-protein cross-links (DPCs). In contrast, double-stranded DNA-binding specifically activates autocatalytic cleavage, and subsequent inactivation. In terms of biological role, DNA-dependent metalloendopeptidase that mediates the proteolytic cleavage of covalent DNA-protein cross-links (DPCs) during DNA synthesis, thereby playing a key role in maintaining genomic integrity. DPCs are highly toxic DNA lesions that interfere with essential chromatin transactions, such as replication and transcription, and which are induced by reactive agents, such as UV light or formaldehyde. Associates with the DNA replication machinery and specifically removes DPCs during DNA synthesis. Catalyzes proteolytic cleavage of the hmces DNA-protein cross-link following unfolding by the brip1/fancj helicase. Acts as a pleiotropic protease for DNA-binding proteins cross-linked with DNA, such as top1, top2a, histones H3 and H4. Mediates degradation of DPCs that are not ubiquitinated, while it is not able to degrade ubiquitinated DPCs. SPRTN activation requires polymerase collision with DPCs followed by helicase bypass of DPCs. May also act as a 'reader' of ubiquitinated pcna: facilitates chromatin association of rad18 and is required for efficient pcna monoubiquitination, promoting a feed-forward loop to enhance pcna ubiquitination and translesion DNA synthesis. Acts as a regulator of translesion DNA synthesis by recruiting vcp/p97 to sites of DNA damage. The protein is DNA-dependent metalloprotease SPRTN of Danio rerio (Zebrafish).